The sequence spans 61 residues: Large ribosomal subunit protein uL30 (61 aa).

The protein belongs to the universal ribosomal protein uL30 family. Part of the 50S ribosomal subunit.

The polypeptide is Large ribosomal subunit protein uL30 (Colwellia psychrerythraea (strain 34H / ATCC BAA-681) (Vibrio psychroerythus)).